The primary structure comprises 186 residues: dTTP/UTP pyrophosphatase (186 aa).

Asp66 acts as the Proton acceptor in catalysis.

This sequence belongs to the Maf family. YhdE subfamily. A divalent metal cation is required as a cofactor.

The protein resides in the cytoplasm. It carries out the reaction dTTP + H2O = dTMP + diphosphate + H(+). The catalysed reaction is UTP + H2O = UMP + diphosphate + H(+). Nucleoside triphosphate pyrophosphatase that hydrolyzes dTTP and UTP. May have a dual role in cell division arrest and in preventing the incorporation of modified nucleotides into cellular nucleic acids. The chain is dTTP/UTP pyrophosphatase from Pyrococcus horikoshii (strain ATCC 700860 / DSM 12428 / JCM 9974 / NBRC 100139 / OT-3).